The chain runs to 76 residues: Conotoxin VnMEKL-012 (76 aa).

Residues 1 to 18 form the signal peptide; sequence MKLTILFLVAAVLMSTQA. A propeptide spanning residues 19-42 is cleaved from the precursor; the sequence is LIQHDGEKSQKAKMKFLTARTLSA. Intrachain disulfides connect Cys-49-Cys-65, Cys-56-Cys-70, and Cys-64-Cys-74.

Belongs to the conotoxin O2 superfamily. In terms of tissue distribution, expressed by the venom duct.

Its subcellular location is the secreted. The sequence is that of Conotoxin VnMEKL-012 from Conus ventricosus (Mediterranean cone).